The following is a 196-amino-acid chain: Aequorin-1 (196 aa).

A propeptide spanning residues 1-7 (MTSEQYS) is cleaved from the precursor. EF-hand domains lie at 18-53 (KWIGRHKHMFNFLDVNHNGRISLDEMVYKASDIVIN), 54-108 (NLGA…SKNQ), 111-146 (LIRLWGDALFDIIDKDQNGAISLDEWKAYTKSDGII), and 147-182 (QSSEDCEETFRVCDIDESGQLDVDEMTRQHLGFWYT). 5 residues coordinate Ca(2+): D31, N33, N35, R37, and E42. May interact with the chromophore stretches follow at residues 47–57 (ASDIVINNLGA), 62–72 (AKRHKDAVEAF), and 107–117 (NQITLIRLWGD). D124, D126, N128, E135, D160, D162, S164, Q166, and E171 together coordinate Ca(2+).

This sequence belongs to the aequorin family. The reduction of the disulfide bond is necessary to regenerate aequorin from apoaequorin.

Functionally, ca(2+)-dependent bioluminescence photoprotein. Displays an emission peak at 470 nm (blue light). Trace amounts of calcium ion trigger the intramolecular oxidation of the chromophore, coelenterazine into coelenteramide and CO(2) with the concomitant emission of light. In Aequorea victoria (Water jellyfish), this protein is Aequorin-1.